We begin with the raw amino-acid sequence, 562 residues long: Thermosome subunit alpha (562 aa).

2 disordered regions span residues 1 to 23 and 526 to 551; these read MAQQ…TSGE and GGQV…GMGG. Gly residues predominate over residues 537–551; the sequence is GPAGGPGGMGGGMGG.

The protein belongs to the TCP-1 chaperonin family. As to quaternary structure, forms an oligomeric complex of eight-membered rings.

Functionally, molecular chaperone; binds unfolded polypeptides in vitro, and has a weak ATPase activity. The polypeptide is Thermosome subunit alpha (thsA) (Halobacterium salinarum (strain ATCC 700922 / JCM 11081 / NRC-1) (Halobacterium halobium)).